The following is a 261-amino-acid chain: MAFADKPNHFINFPLAQFSGFMGKYLKLQSQLVEMGLDCKLQKAPHVSITLLDIKADQYKQVEFAIQEIIDDLAAYEGDIVFDNPHMLGRCLVLDVRGFEELHEDIVEILRRRGCTADQSRHWIPHCTVAQFDEERETKGMQFYHKEPFYLKHNNLLTDAGLELVKIGSSKIDGFYCSELSVWCGERLCYKPPTPKFSDIFGYCCIDKIRGDLEIGDLPQDDEEAWAELSYHYQRNTYFFRHVHDNSIYFRTVCRMKGCMC.

It belongs to the coronaviruses ns2a protein family.

Its subcellular location is the host cytoplasm. Its function is as follows. Not essential for virus replication in transformed murine cells. The chain is Non-structural protein 2a from Mus musculus (Mouse).